A 129-amino-acid polypeptide reads, in one-letter code: Follitropin subunit beta (129 aa).

Residues Met1–Ser20 form the signal peptide. Disulfide bonds link Cys21–Cys69, Cys35–Cys84, Cys38–Cys122, Cys46–Cys100, Cys50–Cys102, and Cys105–Cys112. Residues Asn25 and Asn42 are each glycosylated (N-linked (GlcNAc...) asparagine).

The protein belongs to the glycoprotein hormones subunit beta family. As to quaternary structure, heterodimer. The active follitropin is a heterodimer composed of an alpha chain/CGA shared with other hormones and a unique beta chain/FSHB shown here.

It localises to the secreted. Its function is as follows. Together with the alpha chain CGA constitutes follitropin, the follicle-stimulating hormone, and provides its biological specificity to the hormone heterodimer. Binds FSHR, a G protein-coupled receptor, on target cells to activate downstream signaling pathways. Follitropin is involved in follicle development and spermatogenesis in reproductive organs. This chain is Follitropin subunit beta (FSHB), found in Ailuropoda melanoleuca (Giant panda).